A 352-amino-acid chain; its full sequence is Transcription factor RSL2 (352 aa).

Residues 160 to 169 are compositionally biased toward polar residues; it reads SVTTTKSLTG. The tract at residues 160–277 is disordered; that stretch reads SVTTTKSLTG…ASRGAATDPQ (118 aa). Residues 183 to 192 show a composition bias toward basic residues; that stretch reads KRARVNKRAQ. Residues 223-232 show a composition bias toward polar residues; the sequence is SRQNSSTTFC. The basic motif stretch occupies residues 272–285; sequence AATDPQSLYARKRR. The 50-residue stretch at 272 to 321 folds into the bHLH domain; it reads AATDPQSLYARKRRERINERLRILQNLVPNGTKVDISTMLEEAVHYVKFL. A helix-loop-helix motif region spans residues 286 to 321; that stretch reads ERINERLRILQNLVPNGTKVDISTMLEEAVHYVKFL.

As to quaternary structure, homodimer. Expressed in roots. Expressed in root epidermal hair cells.

The protein resides in the nucleus. Its function is as follows. Transcription factor involved in the regulation of root hair elongation. Does not seem to be a direct transcriptional target of RHD6 and RSL1. Involved in the regulation of root hair elongation in response to low phosphate. In Arabidopsis thaliana (Mouse-ear cress), this protein is Transcription factor RSL2.